A 339-amino-acid polypeptide reads, in one-letter code: Methionine import ATP-binding protein MetN 2 (339 aa).

In terms of domain architecture, ABC transporter spans 2–241 (ISFNNVSKVY…PKTTTTQNFV (240 aa)). An ATP-binding site is contributed by 38–45 (GFSGAGKS).

The protein belongs to the ABC transporter superfamily. Methionine importer (TC 3.A.1.24) family. The complex is composed of two ATP-binding proteins (MetN), two transmembrane proteins (MetI) and a solute-binding protein (MetQ).

The protein resides in the cell membrane. It catalyses the reaction L-methionine(out) + ATP + H2O = L-methionine(in) + ADP + phosphate + H(+). It carries out the reaction D-methionine(out) + ATP + H2O = D-methionine(in) + ADP + phosphate + H(+). Functionally, part of the ABC transporter complex MetNIQ involved in methionine import. Responsible for energy coupling to the transport system. The protein is Methionine import ATP-binding protein MetN 2 of Bacillus anthracis.